The following is a 101-amino-acid chain: Small ribosomal subunit protein uS14 (101 aa).

It belongs to the universal ribosomal protein uS14 family. In terms of assembly, part of the 30S ribosomal subunit. Contacts proteins S3 and S10.

Binds 16S rRNA, required for the assembly of 30S particles and may also be responsible for determining the conformation of the 16S rRNA at the A site. This Actinobacillus pleuropneumoniae serotype 5b (strain L20) protein is Small ribosomal subunit protein uS14.